Here is a 1091-residue protein sequence, read N- to C-terminus: TATA element modulatory factor (1091 aa).

2 disordered regions span residues 42–86 (IPYG…KPVR) and 100–280 (FLSP…DAKS). Positions 57–81 (WDTSTWGLNSTSSEPQSPPTASQAI) are enriched in polar residues. Residues serine 73, serine 78, serine 112, and serine 136 each carry the phosphoserine modification. 3 stretches are compositionally biased toward low complexity: residues 111–122 (KSPVVSKPPSKS), 131–142 (SSLQESSSPGQS), and 194–211 (SENVVNVNTTEDVSTTST). Phosphoserine is present on serine 213. Basic and acidic residues predominate over residues 217 to 234 (ETKDMALEPKEQKHEDRQ). Low complexity-rich tracts occupy residues 242-253 (VSSFSSGTSTTS) and 264-273 (ISESSASSRQ). Residues serine 324, serine 326, serine 329, serine 334, serine 340, and serine 357 each carry the phosphoserine modification. The segment at 329-338 (SLDSRSVSEI) is interaction with Elongin BC complex. Residues 360–443 (TPKTKVVEST…NQPKAPPEKE (84 aa)) form a disordered region. The segment covering 368-379 (STEENAEEEEGN) has biased composition (acidic residues). Serine 411 and serine 540 each carry phosphoserine. Coiled coils occupy residues 443–767 (EDVC…STAR) and 824–894 (IQMS…SQLE). Phosphoserine occurs at positions 923 and 926. Threonine 927 carries the post-translational modification Phosphothreonine. Residue serine 931 is modified to Phosphoserine. Positions 984–1090 (IENLQSQLKL…QIDELLRQRL (107 aa)) form a coiled coil.

Component of the SNF/SWI transcription factor complexes. Interacts with RAB6A. Interacts with TCEB1. Interacts with STAT3 and FER. Interacts with TRNP1; may regulate TRNP1 proteasomal degradation. Phosphorylated by FER.

The protein resides in the cytoplasm. It localises to the nucleus. Its subcellular location is the golgi apparatus membrane. In terms of biological role, potential coactivator of the androgen receptor. May play critical roles in two RAB6-dependent retrograde transport processes: one from endosomes to the Golgi and the other from the Golgi to the ER. Mediates STAT3 degradation. The polypeptide is TATA element modulatory factor (Tmf1) (Mus musculus (Mouse)).